The following is a 479-amino-acid chain: Poly(A) polymerase catalytic subunit (479 aa).

Residues Asp-202 and Asp-204 contribute to the active site. The Ca(2+) site is built by Asp-202, Asp-204, and Asp-253.

Belongs to the poxviridae poly(A) polymerase catalytic subunit family. Heterodimer of a large (catalytic) subunit and a small (regulatory) subunit.

The enzyme catalyses RNA(n) + ATP = RNA(n)-3'-adenine ribonucleotide + diphosphate. Functionally, polymerase that creates the 3'-poly(A) tail of mRNA's. In Homo sapiens (Human), this protein is Poly(A) polymerase catalytic subunit (OPG063).